We begin with the raw amino-acid sequence, 261 residues long: uncharacterized protein (261 aa).

The signal sequence occupies residues 1-22; sequence MKSIKRIGLCISLLILIIFVTS. Residue cysteine 23 is the site of N-palmitoyl cysteine attachment. Cysteine 23 carries the S-diacylglycerol cysteine lipid modification.

It belongs to the staphylococcal tandem lipoprotein family.

The protein resides in the cell membrane. This is an uncharacterized protein from Staphylococcus aureus (strain USA300).